A 415-amino-acid chain; its full sequence is Transfer protein TraSA (415 aa).

Positions 127–326 (DGAVHYRDYR…HRVNDETSAN (200 aa)) constitute a FtsK domain. 145 to 152 (GATESGKS) provides a ligand contact to ATP.

The chain is Transfer protein TraSA (traSA) from Streptomyces ambofaciens.